We begin with the raw amino-acid sequence, 332 residues long: o-succinylbenzoate synthase (332 aa).

Residue Lys135 is the Proton donor of the active site. 3 residues coordinate Mg(2+): Asp163, Glu192, and Asp215. The Proton acceptor role is filled by Lys241.

This sequence belongs to the mandelate racemase/muconate lactonizing enzyme family. MenC type 1 subfamily. A divalent metal cation serves as cofactor.

The enzyme catalyses (1R,6R)-6-hydroxy-2-succinyl-cyclohexa-2,4-diene-1-carboxylate = 2-succinylbenzoate + H2O. It functions in the pathway quinol/quinone metabolism; 1,4-dihydroxy-2-naphthoate biosynthesis; 1,4-dihydroxy-2-naphthoate from chorismate: step 4/7. The protein operates within quinol/quinone metabolism; menaquinone biosynthesis. Converts 2-succinyl-6-hydroxy-2,4-cyclohexadiene-1-carboxylate (SHCHC) to 2-succinylbenzoate (OSB). In Vibrio cholerae serotype O1 (strain ATCC 39315 / El Tor Inaba N16961), this protein is o-succinylbenzoate synthase.